We begin with the raw amino-acid sequence, 189 residues long: Ribulose bisphosphate carboxylase small subunit, chloroplastic (189 aa).

The transit peptide at 1–66 (MASSIMALSS…KTTSNGSRVR (66 aa)) directs the protein to the chloroplast.

It belongs to the RuBisCO small chain family. Heterohexadecamer of 8 large and 8 small subunits.

It localises to the plastid. The protein resides in the chloroplast. Its function is as follows. RuBisCO catalyzes two reactions: the carboxylation of D-ribulose 1,5-bisphosphate, the primary event in carbon dioxide fixation, as well as the oxidative fragmentation of the pentose substrate. Both reactions occur simultaneously and in competition at the same active site. Although the small subunit is not catalytic it is essential for maximal activity. This chain is Ribulose bisphosphate carboxylase small subunit, chloroplastic, found in Larix laricina (Tamarack).